We begin with the raw amino-acid sequence, 64 residues long: Conotoxin Pn-B01121 (64 aa).

Residues 1 to 22 form the signal peptide; it reads MCCLPVFVILLLLIASAPSVDA. Residues 23 to 48 constitute a propeptide that is removed on maturation; sequence LPKTKDDMSLASFHDNAKRTLQILSN. Position 63 is a tryptophan amide (Trp-63).

Belongs to the conotoxin T superfamily. Contains 2 disulfide bonds that can be either 'C1-C3, C2-C4' or 'C1-C4, C2-C3', since these disulfide connectivities have been observed for conotoxins with cysteine framework V (for examples, see AC P0DQQ7 and AC P81755). In terms of tissue distribution, expressed by the venom duct.

The protein localises to the secreted. The polypeptide is Conotoxin Pn-B01121 (Conus pennaceus (Feathered cone)).